We begin with the raw amino-acid sequence, 615 residues long: Nuclear receptor subfamily 1 group D member 1 (615 aa).

Polar residues predominate over residues 1-12; sequence MTTLDSNNNTGG. The required for phosphorylation by CSNK1E and cytoplasmic localization stretch occupies residues 1-70; the sequence is MTTLDSNNNT…TQDPARSFGT (70 aa). Residues 1–120 are disordered; it reads MTTLDSNNNT…SSRVSPSKGT (120 aa). The segment at 1 to 129 is modulating; sequence MTTLDSNNNT…TSNITKLNGM (129 aa). Residues 14–34 are compositionally biased toward low complexity; the sequence is ITYIGSSGSSPSRTSPESLYS. Residues 35 to 48 are compositionally biased toward polar residues; it reads DSSNGSFQSLTQGC. The tract at residues 49–285 is crucial for activation of GJA1; that stretch reads PTYFPPSPTG…PPRSPSPEPT (237 aa). 2 positions are modified to phosphoserine; by GSK3-beta: Ser-55 and Ser-59. Over residues 72 to 103 the composition is skewed to low complexity; that stretch reads PPSLSDDSSPSSASSSSSSSSSSFYNGSPPGS. Positions 130–206 form a DNA-binding region, nuclear receptor; the sequence is VLLCKVCGDV…VGMSRDAVRF (77 aa). 2 NR C4-type zinc fingers span residues 133 to 153 and 170 to 194; these read CKVC…CEGC and CLKN…FKKC. N6-acetyllysine; by KAT5 occurs at positions 192 and 193. Disordered regions lie at residues 235–287, 312–337, and 357–385; these read LCPL…PTVE, PGNF…SQGC, and NGLR…PNSN. A compositionally biased stretch (pro residues) spans 253–262; that stretch reads PSPPPAPAPT. Thr-275 carries the phosphothreonine; by CDK1 modification. Residues 285–615 form the NR LBD domain; it reads TVEDVISQVA…KLLSFRVDAQ (331 aa). Lys-401 bears the N6-acetyllysine mark. Heme is bound at residue Cys-419. Position 592 is an N6-acetyllysine (Lys-592). His-603 serves as a coordination point for heme.

It belongs to the nuclear hormone receptor family. NR1 subfamily. In terms of assembly, binds DNA as a monomer or a homodimer. Interacts with C1D, NR2E3, SP1 and ZNHIT1. Interacts with OPHN1 (via C-terminus). Interacts with PER2; the interaction associates PER2 to BMAL1 promoter region. Interacts with CRY1. Interacts with CCAR2. Interacts with SIAH2. Interacts with FBXW7 and CDK1. Interacts with HUWE1. Interacts with NR0B2. Interacts with NFIL3. Interacts (via domain NR LBD) with HSP90AA1 and HSP90AB1. In terms of processing, ubiquitinated, leading to its proteasomal degradation. Ubiquitinated by the SCF(FBXW7) complex when phosphorylated by CDK1 leading to its proteasomal degradation. Ubiquitinated by SIAH2; leading to its proteasomal degradation. Rapidly ubiquitinated in response to inflammatory triggers and sumoylation is a prerequisite to its ubiquitination. Sumoylated by UBE2I, desumoylated by SENP1, and sumoylation is a prerequisite to its ubiquitination. Post-translationally, phosphorylated by CSNK1E; phosphorylation enhances its cytoplasmic localization. In terms of processing, undergoes lysosome-mediated degradation in a time-dependent manner in the liver.

Its subcellular location is the nucleus. The protein resides in the cytoplasm. It localises to the cell projection. The protein localises to the dendrite. It is found in the dendritic spine. Its function is as follows. Transcriptional repressor which coordinates circadian rhythm and metabolic pathways in a heme-dependent manner. Integral component of the complex transcription machinery that governs circadian rhythmicity and forms a critical negative limb of the circadian clock by directly repressing the expression of core clock components BMAL1, CLOCK and CRY1. Also regulates genes involved in metabolic functions, including lipid and bile acid metabolism, adipogenesis, gluconeogenesis and the macrophage inflammatory response. Acts as a receptor for heme which stimulates its interaction with the NCOR1/HDAC3 corepressor complex, enhancing transcriptional repression. Recognizes two classes of DNA response elements within the promoter of its target genes and can bind to DNA as either monomers or homodimers, depending on the nature of the response element. Binds as a monomer to a response element composed of the consensus half-site motif 5'-[A/G]GGTCA-3' preceded by an A/T-rich 5' sequence (RevRE), or as a homodimer to a direct repeat of the core motif spaced by two nucleotides (RevDR-2). Acts as a potent competitive repressor of ROR alpha (RORA) function and regulates the levels of its ligand heme by repressing the expression of PPARGC1A, a potent inducer of heme synthesis. Regulates lipid metabolism by repressing the expression of APOC3 and by influencing the activity of sterol response element binding proteins (SREBPs); represses INSIG2 which interferes with the proteolytic activation of SREBPs which in turn govern the rhythmic expression of enzymes with key functions in sterol and fatty acid synthesis. Regulates gluconeogenesis via repression of G6PC1 and PEPCK and adipocyte differentiation via repression of PPARG. Regulates glucagon release in pancreatic alpha-cells via the AMPK-NAMPT-SIRT1 pathway and the proliferation, glucose-induced insulin secretion and expression of key lipogenic genes in pancreatic-beta cells. Positively regulates bile acid synthesis by increasing hepatic expression of CYP7A1 via repression of NR0B2 and NFIL3 which are negative regulators of CYP7A1. Modulates skeletal muscle oxidative capacity by regulating mitochondrial biogenesis and autophagy; controls mitochondrial biogenesis and respiration by interfering with the STK11-PRKAA1/2-SIRT1-PPARGC1A signaling pathway. Represses the expression of SERPINE1/PAI1, an important modulator of cardiovascular disease and the expression of inflammatory cytokines and chemokines in macrophages. Represses gene expression at a distance in macrophages by inhibiting the transcription of enhancer-derived RNAs (eRNAs). Plays a role in the circadian regulation of body temperature and negatively regulates thermogenic transcriptional programs in brown adipose tissue (BAT); imposes a circadian oscillation in BAT activity, increasing body temperature when awake and depressing thermogenesis during sleep. In concert with NR2E3, regulates transcriptional networks critical for photoreceptor development and function. In addition to its activity as a repressor, can also act as a transcriptional activator. In the ovarian granulosa cells acts as a transcriptional activator of STAR which plays a role in steroid biosynthesis. In collaboration with SP1, activates GJA1 transcription in a heme-independent manner. Represses the transcription of CYP2B10, CYP4A10 and CYP4A14. Represses the transcription of CES2. Represses and regulates the circadian expression of TSHB in a NCOR1-dependent manner. Negatively regulates the protein stability of NR3C1 and influences the time-dependent subcellular distribution of NR3C1, thereby affecting its transcriptional regulatory activity. Plays a critical role in the circadian control of neutrophilic inflammation in the lung; under resting, non-stress conditions, acts as a rhythmic repressor to limit inflammatory activity whereas in the presence of inflammatory triggers undergoes ubiquitin-mediated degradation thereby relieving inhibition of the inflammatory response. Plays a key role in the circadian regulation of microglial activation and neuroinflammation; suppresses microglial activation through the NF-kappaB pathway in the central nervous system. Plays a role in the regulation of the diurnal rhythms of lipid and protein metabolism in the skeletal muscle via transcriptional repression of genes controlling lipid and amino acid metabolism in the muscle. The protein is Nuclear receptor subfamily 1 group D member 1 (Nr1d1) of Rattus norvegicus (Rat).